The primary structure comprises 306 residues: Acetaldehyde dehydrogenase 2/3 (306 aa).

Cysteine 130 acts as the Acyl-thioester intermediate in catalysis. NAD(+)-binding positions include 161 to 169 (SAGPGTRKN) and asparagine 272.

It belongs to the acetaldehyde dehydrogenase family.

The catalysed reaction is acetaldehyde + NAD(+) + CoA = acetyl-CoA + NADH + H(+). In Azoarcus sp. (strain BH72), this protein is Acetaldehyde dehydrogenase 2/3 (mhpF).